Consider the following 214-residue polypeptide: uncharacterized protein (214 aa).

This sequence belongs to the uracil-DNA glycosylase (UDG) superfamily.

This is an uncharacterized protein from Haemophilus influenzae (strain ATCC 51907 / DSM 11121 / KW20 / Rd).